The sequence spans 488 residues: Microtubule-destabilizing protein 60 (488 aa).

The segment covering 25 to 56 (AQEVSRFSENSNPNFVSHSTPLEKSSKSSAQK) has biased composition (polar residues). Disordered regions lie at residues 25 to 71 (AQEV…VFSP), 262 to 304 (HASV…TKKQ), and 436 to 457 (DRPF…PKFN). The segment covering 264-280 (SVSSSWDNSVSSLNSNG) has biased composition (low complexity).

Belongs to the TPX2 family.

Its subcellular location is the cytoplasm. The protein localises to the cytoskeleton. Binds directly to microtubules. Microtubule-destabilizing protein involved in the PIF3-dependent positive regulation of hypocotyl cell elongation via the modulation of cortical microtubules dynamic in response to light and ethylene signaling. Promotes submergence-induced and ethylene-dependent underwater hypocotyl elongation. The sequence is that of Microtubule-destabilizing protein 60 from Arabidopsis thaliana (Mouse-ear cress).